We begin with the raw amino-acid sequence, 45 residues long: Photosystem II reaction center protein K (45 aa).

Positions 1-8 (MELAMLLA) are excised as a propeptide. Residues 24-44 (LPVIPVFFLLLAFVWQAAVGF) form a helical membrane-spanning segment.

This sequence belongs to the PsbK family. PSII is composed of 1 copy each of membrane proteins PsbA, PsbB, PsbC, PsbD, PsbE, PsbF, PsbH, PsbI, PsbJ, PsbK, PsbL, PsbM, PsbT, PsbX, PsbY, PsbZ, Psb30/Ycf12, peripheral proteins PsbO, CyanoQ (PsbQ), PsbU, PsbV and a large number of cofactors. It forms dimeric complexes.

Its subcellular location is the cellular thylakoid membrane. One of the components of the core complex of photosystem II (PSII). PSII is a light-driven water:plastoquinone oxidoreductase that uses light energy to abstract electrons from H(2)O, generating O(2) and a proton gradient subsequently used for ATP formation. It consists of a core antenna complex that captures photons, and an electron transfer chain that converts photonic excitation into a charge separation. In Trichodesmium erythraeum (strain IMS101), this protein is Photosystem II reaction center protein K.